Consider the following 190-residue polypeptide: Hypoxanthine/guanine phosphoribosyltransferase (190 aa).

This sequence belongs to the purine/pyrimidine phosphoribosyltransferase family. Archaeal HPRT subfamily. Homodimer.

It localises to the cytoplasm. The catalysed reaction is IMP + diphosphate = hypoxanthine + 5-phospho-alpha-D-ribose 1-diphosphate. The enzyme catalyses GMP + diphosphate = guanine + 5-phospho-alpha-D-ribose 1-diphosphate. It functions in the pathway purine metabolism; IMP biosynthesis via salvage pathway; IMP from hypoxanthine: step 1/1. Its function is as follows. Catalyzes a salvage reaction resulting in the formation of IMP that is energically less costly than de novo synthesis. In Methanobacterium lacus (strain AL-21), this protein is Hypoxanthine/guanine phosphoribosyltransferase.